A 351-amino-acid chain; its full sequence is Phospho-N-acetylmuramoyl-pentapeptide-transferase (351 aa).

The next 10 helical transmembrane spans lie at 17-37 (MAYATIFAFLLSLIVGPYIIL), 62-82 (GIPTMGGILIFFCVFISLVFW), 85-105 (ILNVYFLIMVFVMLGFAFLGF), 130-150 (IIFSFFSVGILYYFGGEHVSV), 158-178 (SFQIDLGLFYIPFGMFILISA), 190-210 (GLAIGLSIVITGALIIIAYLT), 230-250 (LVIFLGALLGGSFGFLWFNAY), 254-274 (IMMGDTGSLALGAILGMAALI), 279-299 (ILFSILAGVFIIETMSVIIQV), and 328-348 (QVVIRFWIIGLIFAIIALSTI).

Belongs to the glycosyltransferase 4 family. MraY subfamily. Requires Mg(2+) as cofactor.

It localises to the cell inner membrane. The catalysed reaction is UDP-N-acetyl-alpha-D-muramoyl-L-alanyl-gamma-D-glutamyl-meso-2,6-diaminopimeloyl-D-alanyl-D-alanine + di-trans,octa-cis-undecaprenyl phosphate = di-trans,octa-cis-undecaprenyl diphospho-N-acetyl-alpha-D-muramoyl-L-alanyl-D-glutamyl-meso-2,6-diaminopimeloyl-D-alanyl-D-alanine + UMP. It functions in the pathway cell wall biogenesis; peptidoglycan biosynthesis. Its function is as follows. Catalyzes the initial step of the lipid cycle reactions in the biosynthesis of the cell wall peptidoglycan: transfers peptidoglycan precursor phospho-MurNAc-pentapeptide from UDP-MurNAc-pentapeptide onto the lipid carrier undecaprenyl phosphate, yielding undecaprenyl-pyrophosphoryl-MurNAc-pentapeptide, known as lipid I. This is Phospho-N-acetylmuramoyl-pentapeptide-transferase from Borreliella burgdorferi (strain ATCC 35210 / DSM 4680 / CIP 102532 / B31) (Borrelia burgdorferi).